We begin with the raw amino-acid sequence, 593 residues long: Auxin response factor 12 (593 aa).

Residues 126-228 (FTKVLTASDT…ELRVGIRRAR (103 aa)) constitute a DNA-binding region (TF-B3). In terms of domain architecture, PB1 spans 511–592 (RTCTKVQMQG…MVKKIFIQKR (82 aa)).

This sequence belongs to the ARF family. In terms of assembly, homodimers and heterodimers.

It localises to the nucleus. Functionally, auxin response factors (ARFs) are transcriptional factors that bind specifically to the DNA sequence 5'-TGTCTC-3' found in the auxin-responsive promoter elements (AuxREs). Could act as transcriptional activator or repressor. Formation of heterodimers with Aux/IAA proteins may alter their ability to modulate early auxin response genes expression. This Arabidopsis thaliana (Mouse-ear cress) protein is Auxin response factor 12 (ARF12).